Consider the following 136-residue polypeptide: MARTKQTARKSHGGKAPRTLLATKAARKSAPTTGGVKKPHRYRPGTVALREIRKYQKSTELLIRKLPFQRLVREIAQDYKTDLRFQSHAVLALQEAAEAYLVGLFEDTNLCAIHAKRVTIMPKDVQLARRIRGERA.

The segment covering 1–15 (MARTKQTARKSHGGK) has biased composition (basic residues). Residues 1–42 (MARTKQTARKSHGGKAPRTLLATKAARKSAPTTGGVKKPHRY) are disordered. 2 positions are modified to N6,N6,N6-trimethyllysine; alternate: lysine 5 and lysine 10. 2 positions are modified to N6,N6-dimethyllysine; alternate: lysine 5 and lysine 10. N6-methyllysine; alternate occurs at positions 5 and 10. The residue at position 10 (lysine 10) is an N6-acetyllysine; alternate. Serine 11 carries the post-translational modification Phosphoserine. Lysine 15 is subject to N6-acetyllysine. Lysine 24 and lysine 28 each carry N6-methyllysine; alternate. Lysine 24 carries the post-translational modification N6-acetyllysine; alternate. N6,N6,N6-trimethyllysine; alternate is present on lysine 28. Lysine 28 is modified (N6,N6-dimethyllysine; alternate). Phosphoserine is present on serine 29. Lysine 37 bears the N6,N6,N6-trimethyllysine; alternate mark. Residue lysine 37 is modified to N6,N6-dimethyllysine; alternate. Lysine 37 carries the post-translational modification N6-methyllysine; alternate.

It belongs to the histone H3 family. The nucleosome is a histone octamer containing two molecules each of H2A, H2B, H3 and H4 assembled in one H3-H4 heterotetramer and two H2A-H2B heterodimers. The octamer wraps approximately 147 bp of DNA. As to expression, expressed in roots, seedlings, leaves and open flowers.

The protein localises to the nucleus. It localises to the chromosome. Its function is as follows. Core component of nucleosome. Nucleosomes wrap and compact DNA into chromatin, limiting DNA accessibility to the cellular machineries which require DNA as a template. Histones thereby play a central role in transcription regulation, DNA repair, DNA replication and chromosomal stability. DNA accessibility is regulated via a complex set of post-translational modifications of histones, also called histone code, and nucleosome remodeling. This chain is Histone H3-like 3, found in Arabidopsis thaliana (Mouse-ear cress).